A 377-amino-acid chain; its full sequence is Nitric oxide reductase FlRd-NAD(+) reductase (377 aa).

It belongs to the FAD-dependent oxidoreductase family. The cofactor is FAD.

The protein localises to the cytoplasm. It carries out the reaction 2 reduced [nitric oxide reductase rubredoxin domain] + NAD(+) + H(+) = 2 oxidized [nitric oxide reductase rubredoxin domain] + NADH. The protein operates within nitrogen metabolism; nitric oxide reduction. In terms of biological role, one of at least two accessory proteins for anaerobic nitric oxide (NO) reductase. Reduces the rubredoxin moiety of NO reductase. This chain is Nitric oxide reductase FlRd-NAD(+) reductase, found in Escherichia coli O6:H1 (strain CFT073 / ATCC 700928 / UPEC).